Here is a 474-residue protein sequence, read N- to C-terminus: HTH-type transcriptional regulator RamB (474 aa).

An HTH cro/C1-type domain is found at 10–64; sequence VRQLRNERGFSQAALAQMLEISPSYLNQIEHDVRPLTVAVLLRITEVFGVDATFF. Positions 21 to 40 form a DNA-binding region, H-T-H motif; the sequence is QAALAQMLEISPSYLNQIEH.

The protein belongs to the short-chain fatty acyl-CoA assimilation regulator (ScfR) family.

Involved in the control of the glyoxylate cycle. RamB negatively controls the expression of icl expression during growth on acetate as the sole carbon source. The polypeptide is HTH-type transcriptional regulator RamB (Mycobacterium tuberculosis (strain CDC 1551 / Oshkosh)).